Consider the following 182-residue polypeptide: ERGELALKDARSKLADVEDALQKAKQDMARLLREYQELMNTKLALDVEIATYRKLLEGEECRLSGEGVGPVNISVVTNTVSSGYGGGSGFGGGLGGGLGGGLGGGLGGGLGGGLGSGLGGGGSSSFYSSSSGGVGLGGGLSVGGSGFSASSGRSLGFGSGGGSSSSVKFVSTTSSSRKSFKS.

Residues 1–63 (ERGELALKDA…KLLEGEECRL (63 aa)) enclose the IF rod domain. Positions 1 to 63 (ERGELALKDA…KLLEGEECRL (63 aa)) are coil 2. The tract at residues 63 to 182 (LSGEGVGPVN…TSSSRKSFKS (120 aa)) is tail. Positions 157–182 (FGSGGGSSSSVKFVSTTSSSRKSFKS) are disordered. Positions 164–182 (SSSVKFVSTTSSSRKSFKS) are enriched in low complexity.

This sequence belongs to the intermediate filament family. Heterotetramer of two type I and two type II keratins.

The polypeptide is Keratin, type II cytoskeletal 60 kDa, component III (Bos taurus (Bovine)).